Consider the following 283-residue polypeptide: Phosphatidylglycerol--prolipoprotein diacylglyceryl transferase (283 aa).

Transmembrane regions (helical) follow at residues 21-41, 62-82, 106-126, 136-156, 190-210, 218-238, and 252-272; these read IEVH…FYMA, YFLW…ILIY, FIGI…IASY, LLIY…FGRI, PSQL…VMWA, GLLI…AEFY, and LSMG…ILLY. An a 1,2-diacyl-sn-glycero-3-phospho-(1'-sn-glycerol)-binding site is contributed by Arg155.

Belongs to the Lgt family.

It is found in the cell inner membrane. It catalyses the reaction L-cysteinyl-[prolipoprotein] + a 1,2-diacyl-sn-glycero-3-phospho-(1'-sn-glycerol) = an S-1,2-diacyl-sn-glyceryl-L-cysteinyl-[prolipoprotein] + sn-glycerol 1-phosphate + H(+). It functions in the pathway protein modification; lipoprotein biosynthesis (diacylglyceryl transfer). Functionally, catalyzes the transfer of the diacylglyceryl group from phosphatidylglycerol to the sulfhydryl group of the N-terminal cysteine of a prolipoprotein, the first step in the formation of mature lipoproteins. This is Phosphatidylglycerol--prolipoprotein diacylglyceryl transferase from Helicobacter acinonychis (strain Sheeba).